The chain runs to 130 residues: MKDWLDEIKWNSDGLVPAIAQDHKTGRVLMMAWMNRESLALTAAEHRAIYWSRSRGKLWRKGEESGHVQKLHEMRLDCDADVIILMVEQLGHIACHTGRESCFYRVFEDGQWKTVDPVLKDPNAIYSAGH.

Asp77 lines the Mg(2+) pocket. Cys78 contributes to the Zn(2+) binding site. Mg(2+)-binding residues include Asp79 and Asp81. Cys95 and Cys102 together coordinate Zn(2+).

Belongs to the PRA-CH family. As to quaternary structure, homodimer. Requires Mg(2+) as cofactor. Zn(2+) is required as a cofactor.

It localises to the cytoplasm. It catalyses the reaction 1-(5-phospho-beta-D-ribosyl)-5'-AMP + H2O = 1-(5-phospho-beta-D-ribosyl)-5-[(5-phospho-beta-D-ribosylamino)methylideneamino]imidazole-4-carboxamide. It participates in amino-acid biosynthesis; L-histidine biosynthesis; L-histidine from 5-phospho-alpha-D-ribose 1-diphosphate: step 3/9. Its function is as follows. Catalyzes the hydrolysis of the adenine ring of phosphoribosyl-AMP. This is Phosphoribosyl-AMP cyclohydrolase from Pseudomonas entomophila (strain L48).